Reading from the N-terminus, the 354-residue chain is Probable RNA methyltransferase AZOSEA28700 (354 aa).

Glu-88 functions as the Proton acceptor in the catalytic mechanism. The Radical SAM core domain maps to 91 to 317 (LLPRDGLCVS…TKLRHSAGQD (227 aa)). Cys-98 and Cys-322 are joined by a disulfide. [4Fe-4S] cluster contacts are provided by Cys-105, Cys-109, and Cys-112. S-adenosyl-L-methionine is bound by residues 150-151 (GE), Ser-180, 203-205 (SLH), and Asn-279. Residue Cys-322 is the S-methylcysteine intermediate of the active site.

This sequence belongs to the radical SAM superfamily. RlmN family. It depends on [4Fe-4S] cluster as a cofactor.

It is found in the cytoplasm. The polypeptide is Probable RNA methyltransferase AZOSEA28700 (Aromatoleum aromaticum (strain DSM 19018 / LMG 30748 / EbN1) (Azoarcus sp. (strain EbN1))).